The sequence spans 255 residues: Coiled-coil domain-containing 92B (255 aa).

A coiled-coil region spans residues 28–90; sequence LRDLHLEILR…AAANAELRRE (63 aa). The interval 149-255 is disordered; sequence QRLQAPRPGP…SQPSAPGDPE (107 aa). A compositionally biased stretch (basic residues) spans 166–177; sequence PRRRALRARRPP. A compositionally biased stretch (pro residues) spans 242-255; that stretch reads QPAPSQPSAPGDPE.

The polypeptide is Coiled-coil domain-containing 92B (Homo sapiens (Human)).